The chain runs to 260 residues: Carbonic anhydrase 2 (260 aa).

Ser2 carries the N-acetylserine modification. Ser2 bears the Phosphoserine mark. Residues 3-259 (HHWGYGKHNG…LKNRQVRGFP (257 aa)) form the Alpha-carbonic anhydrase domain. His64 functions as the Proton donor/acceptor in the catalytic mechanism. His94, His96, and His119 together coordinate Zn(2+). Ser165 and Ser172 each carry phosphoserine. Substrate is bound at residue 198–199 (TT).

The protein belongs to the alpha-carbonic anhydrase family. As to quaternary structure, interacts with SLC4A4. Interaction with SLC4A7 regulates SLC4A7 transporter activity. It depends on Zn(2+) as a cofactor.

The protein resides in the cytoplasm. It is found in the cell membrane. It catalyses the reaction hydrogencarbonate + H(+) = CO2 + H2O. It carries out the reaction urea = cyanamide + H2O. With respect to regulation, inhibited by acetazolamide. Functionally, catalyzes the reversible hydration of carbon dioxide. Can also hydrate cyanamide to urea. Involved in the regulation of fluid secretion into the anterior chamber of the eye. Essential for bone resorption and osteoclast differentiation. Contributes to intracellular pH regulation in the duodenal upper villous epithelium during proton-coupled peptide absorption. Stimulates the chloride-bicarbonate exchange activity of SLC26A6. The chain is Carbonic anhydrase 2 (CA2) from Bos taurus (Bovine).